A 41-amino-acid polypeptide reads, in one-letter code: Large ribosomal subunit protein bL36 (41 aa).

The protein belongs to the bacterial ribosomal protein bL36 family.

This is Large ribosomal subunit protein bL36 from Novosphingobium aromaticivorans (strain ATCC 700278 / DSM 12444 / CCUG 56034 / CIP 105152 / NBRC 16084 / F199).